A 228-amino-acid polypeptide reads, in one-letter code: L-ribulose-5-phosphate 4-epimerase UlaF (228 aa).

Residues 26–27, 43–44, and 72–73 contribute to the substrate site; these read GN, SG, and SS. Residues D74, H93, and H95 each contribute to the Zn(2+) site. The Proton donor/acceptor role is filled by D118. H167 lines the Zn(2+) pocket. The Proton donor/acceptor role is filled by Y225.

This sequence belongs to the aldolase class II family. AraD/FucA subfamily. Zn(2+) serves as cofactor.

The catalysed reaction is L-ribulose 5-phosphate = D-xylulose 5-phosphate. It participates in cofactor degradation; L-ascorbate degradation; D-xylulose 5-phosphate from L-ascorbate: step 4/4. Functionally, catalyzes the isomerization of L-ribulose 5-phosphate to D-xylulose 5-phosphate. Is involved in the anaerobic L-ascorbate utilization. This chain is L-ribulose-5-phosphate 4-epimerase UlaF, found in Salmonella paratyphi B (strain ATCC BAA-1250 / SPB7).